A 304-amino-acid polypeptide reads, in one-letter code: Putative ankyrin repeat protein R598 (304 aa).

ANK repeat units lie at residues 7–36, 77–107, 122–151, 152–181, 183–209, 210–239, and 265–293; these read NIVT…SINL, YIST…PVDF, GSNH…DVNA, HNYL…NVLR, ANGN…EIDM, NLSR…DINK, and FDFT…NVDI.

The protein is Putative ankyrin repeat protein R598 of Acanthamoeba polyphaga (Amoeba).